The primary structure comprises 306 residues: 3-methyl-2-oxobutanoate hydroxymethyltransferase (306 aa).

2 residues coordinate Mg(2+): Asp-53 and Asp-96. 3-methyl-2-oxobutanoate-binding positions include 53–54 (DS), Asp-96, and Lys-126. A Mg(2+)-binding site is contributed by Glu-128. Glu-195 acts as the Proton acceptor in catalysis.

This sequence belongs to the PanB family. In terms of assembly, homodecamer; pentamer of dimers. Requires Mg(2+) as cofactor.

Its subcellular location is the cytoplasm. It carries out the reaction 3-methyl-2-oxobutanoate + (6R)-5,10-methylene-5,6,7,8-tetrahydrofolate + H2O = 2-dehydropantoate + (6S)-5,6,7,8-tetrahydrofolate. It functions in the pathway cofactor biosynthesis; (R)-pantothenate biosynthesis; (R)-pantoate from 3-methyl-2-oxobutanoate: step 1/2. Its function is as follows. Catalyzes the reversible reaction in which hydroxymethyl group from 5,10-methylenetetrahydrofolate is transferred onto alpha-ketoisovalerate to form ketopantoate. This Anaeromyxobacter sp. (strain K) protein is 3-methyl-2-oxobutanoate hydroxymethyltransferase.